A 275-amino-acid chain; its full sequence is Endolytic peptidoglycan transglycosylase RlpA (275 aa).

Residues 1-22 form the signal peptide; that stretch reads MQIKTITLKLSAVSLGALFFSG. C23 carries the N-palmitoyl cysteine lipid modification. C23 is lipidated: S-diacylglycerol cysteine. One can recognise an SPOR domain in the interval 200 to 275; the sequence is IYEGGNFMVQ…AFAGAFVVRE (76 aa).

It belongs to the RlpA family.

It is found in the cell membrane. Lytic transglycosylase with a strong preference for naked glycan strands that lack stem peptides. The polypeptide is Endolytic peptidoglycan transglycosylase RlpA (Campylobacter jejuni subsp. jejuni serotype O:2 (strain ATCC 700819 / NCTC 11168)).